A 29-amino-acid polypeptide reads, in one-letter code: Protein 1.5 (29 aa).

This is Protein 1.5 from Escherichia phage T7 (Bacteriophage T7).